Here is a 357-residue protein sequence, read N- to C-terminus: Quinolinate synthase (357 aa).

Iminosuccinate contacts are provided by His-50 and Ser-71. A [4Fe-4S] cluster-binding site is contributed by Cys-116. Iminosuccinate-binding positions include 142–144 (YAN) and Ser-159. Cys-203 provides a ligand contact to [4Fe-4S] cluster. Iminosuccinate is bound by residues 229–231 (HPE) and Thr-246. Cys-300 contacts [4Fe-4S] cluster.

The protein belongs to the quinolinate synthase family. Type 1 subfamily. [4Fe-4S] cluster serves as cofactor.

It localises to the cytoplasm. It carries out the reaction iminosuccinate + dihydroxyacetone phosphate = quinolinate + phosphate + 2 H2O + H(+). It functions in the pathway cofactor biosynthesis; NAD(+) biosynthesis; quinolinate from iminoaspartate: step 1/1. Catalyzes the condensation of iminoaspartate with dihydroxyacetone phosphate to form quinolinate. The sequence is that of Quinolinate synthase from Shewanella oneidensis (strain ATCC 700550 / JCM 31522 / CIP 106686 / LMG 19005 / NCIMB 14063 / MR-1).